The primary structure comprises 698 residues: MNKLDISTINIEQLTSDHAKKIVDFLALELQKYDQAYYSDNNPLVTDAQYDVLKNLNNKIVAKFPHLALVNDHSKKVGFTPSAQFSKVVHLKPMLSLANGFCVEDISNFITKIQNFLKIDHCPKIVCEYKIDGLSFNARYEYGVLTLASTRGDGQIGENITENLKTIQSFPQTLPITDKVFEVRGEIYITNNDFRVLNIQQQKLGKALFSNPRNAAAGSIRQLDPAITAQRPLKYFVYALGEVTNHHFASTQFELLQKLSQLKFSVNTDYILSDNLHSMIEFYNNVATERNNLAFEIDGVVYKVNDFALQERLGATSTSPRFAIAYKFPALIGRTKITNITLQVGKTGAVTPVALLIPINIAGVTISRATLHNKQEIESKDIRIGDYVFLHRAGDVIPKINGVDLSARDAQSSTRFIFPATCPSCNQNLVVNEGETVARCGNSLACPAQIYERICHFVSKDALNIDGLGRQRIRFLLDNKYIVNIVDIFLLEENNKLLSSNKLEDIAGWGIKSVNKLFKNINQAKNVILDRFIYALAVKHVGKYSAKLLAKEFKTAKNFIDQSLKLANNVTEIYEKLCNIEGLGVKTADQLKQFFMVSANVNLITKLVNILTIQDWQYHGDNLLLSNQTIVFTGTFATVSRSEIKVQAEKLGAKVGTQVSNNTDLLVVGNKAGNKLQKAQQLGIKIINEEEWIKMVNE.

NAD(+) contacts are provided by residues 47–51, 96–97, and E128; these read DAQYD and SL. K130 serves as the catalytic N6-AMP-lysine intermediate. NAD(+) contacts are provided by R151, E186, K303, and K327. C422, C425, C440, and C446 together coordinate Zn(2+). A BRCT domain is found at 620–698; sequence GDNLLLSNQT…EEEWIKMVNE (79 aa).

Belongs to the NAD-dependent DNA ligase family. LigA subfamily. The cofactor is Mg(2+). Mn(2+) serves as cofactor.

The catalysed reaction is NAD(+) + (deoxyribonucleotide)n-3'-hydroxyl + 5'-phospho-(deoxyribonucleotide)m = (deoxyribonucleotide)n+m + AMP + beta-nicotinamide D-nucleotide.. Functionally, DNA ligase that catalyzes the formation of phosphodiester linkages between 5'-phosphoryl and 3'-hydroxyl groups in double-stranded DNA using NAD as a coenzyme and as the energy source for the reaction. It is essential for DNA replication and repair of damaged DNA. In Orientia tsutsugamushi (strain Boryong) (Rickettsia tsutsugamushi), this protein is DNA ligase.